Reading from the N-terminus, the 509-residue chain is MEELQGYLKIDRSRERDFLYPLLFQEYIYALAHDHGLNKSILYEPMENLGYDKKYSLIIVKRLITRMYQQKHLIILTNDSNPNFFFGHNKNLDSQMISEGVAVIVELPFSLRLVSSPESKEIDKSMTTLRSIHSIFPFLEDKLLHLNHVLDILIPYPIHLELLVQTLRSWIQDAPFLHLLRFFLYKYHNWNSLITQKTKMILFFSKENQRFFLFLYNFHVYESESIFVFLRKQSYHLRSTSSRAFLDRTHFYRKIEHFLVDFRNDFHTILWLFKDPFIQYFRFQGKSILSSKGTPLLMKKWKYYLVNLWECHFYFWSQPDRIHINQLSNHFIDFLGYLSSVRPTPSAVRSQMLEKSFFIDIVIKKFDTRVPIIPLIGSLAKAKFCNFSGHPISKPAWADSSDSDIIDRFGRICRNLSHYYSGSSKKKSLYRIKYILRLSCARTLARKHKSTVRSFLKRLGSEFLEEFLMEEEQVLSFILPRISYFSKRLYKERIWYFDIIRINDLTNLS.

Belongs to the intron maturase 2 family. MatK subfamily.

It is found in the plastid. It localises to the chloroplast. Usually encoded in the trnK tRNA gene intron. Probably assists in splicing its own and other chloroplast group II introns. The protein is Maturase K of Clematis vitalba (Evergreen clematis).